A 695-amino-acid polypeptide reads, in one-letter code: MSTQSRWQELADQVRHHRQLYYYGEPEISDADFDALLQELKDLEQAHPEVVTGASPTEEVAPAPPTSSPFRNVDHREQMLSLDNVFDTEQLAGWLDRTPAKTYLTELKIDGASINLLYIDGQLELALTRGDGTTGEDITHNARTLDDIPDTLHGTDEFPVPELVEIRGEVFIDVEDFAAMNAQRQAEGLKMFANPRNAAAGAMRQKNSADTAKRPLKLICHGIGAREGFSPASQHDAYRAIAAWGLPVSPYTKQVHSAKEVQQQVEYWGNHRHDAAHEMDGLVVKVDSLEEQLELGHTSRAPRWAIAYKYPPEEAMTTLHNIRVGIGRTGRATPYAVMAPKYVAGSTVSMATLHNPTEAHRKGVLLGDTITIRKAGEVIPEVLGPVEDKRTGAERPFLFSTFCPECGTRLAPSKVGDADWRCPNTQYCPGQLHTRLTYLASRKAFDIDALGEKGAYDLIHSGVLADESELFDLRAEDLEKTSSYATKAGKLNKSGETLLEKLQSAKEADLWRVLVALSIRHVGPTAAKALAKHFESVEDIASASAEEMAGIDGVAETIAESISDWFTVDWHRRIVDRWAAAGVRMRREAGNVPGAADGVDSALLEGLTIVVTGSLEDFDRTAAKEAIEARGGKAAGSVSKKTDFLVAGEKAGSKLKKAEDLGVPVLDEAAFKELLENGAPSSGDDASTSADSVDD.

An NAD(+)-binding site is contributed by 30-34 (DADFD). The tract at residues 52 to 71 (TGASPTEEVAPAPPTSSPFR) is disordered. NAD(+) is bound by residues 81–82 (SL) and E106. K108 acts as the N6-AMP-lysine intermediate in catalysis. 4 residues coordinate NAD(+): R129, E169, K285, and K309. Positions 403, 406, 422, and 428 each coordinate Zn(2+). Residues 599-688 (VDSALLEGLT…APSSGDDAST (90 aa)) enclose the BRCT domain. The disordered stretch occupies residues 676–695 (ENGAPSSGDDASTSADSVDD). Low complexity predominate over residues 679 to 695 (APSSGDDASTSADSVDD).

The protein belongs to the NAD-dependent DNA ligase family. LigA subfamily. Mg(2+) serves as cofactor. Requires Mn(2+) as cofactor.

The catalysed reaction is NAD(+) + (deoxyribonucleotide)n-3'-hydroxyl + 5'-phospho-(deoxyribonucleotide)m = (deoxyribonucleotide)n+m + AMP + beta-nicotinamide D-nucleotide.. Its function is as follows. DNA ligase that catalyzes the formation of phosphodiester linkages between 5'-phosphoryl and 3'-hydroxyl groups in double-stranded DNA using NAD as a coenzyme and as the energy source for the reaction. It is essential for DNA replication and repair of damaged DNA. The chain is DNA ligase from Corynebacterium jeikeium (strain K411).